We begin with the raw amino-acid sequence, 163 residues long: Protein EARLY RESPONSIVE TO DEHYDRATION 15 (163 aa).

The PAM2-like motif lies at 10-20 (TLNPDAPLFIP). Positions 118-163 (NGEMVKKSSGNRSPRSIVEPAKYAEKPAKWGNQRVAAAPRNIHQPR) are disordered.

Interacts with PAB2, PAB4 and PAB8. Interacts with MPC. As to expression, expressed in cauline leaves, stems, rosette leaves, immature siliques and primary inflorescences.

It is found in the cytoplasm. Its function is as follows. Central component of stress responses that interacts with poly(A)-binding proteins. Negative regulator of abscisic acid (ABA) responses, including resistance to drought and freezing as well as stomatal closure regulation. Mediates resistance to the bacterial necrotroph pathogen Erwinia carotovora subsp. carotovora and promotes the induction of marker genes for systemic acquired resistance (SAR). The sequence is that of Protein EARLY RESPONSIVE TO DEHYDRATION 15 (ERD15) from Arabidopsis thaliana (Mouse-ear cress).